A 437-amino-acid polypeptide reads, in one-letter code: GTPase Era, mitochondrial (437 aa).

A mitochondrion-targeting transit peptide spans 1–43 (MAASSWRGAVLLRTVSGLWQAGPDAAREWMTRLPSLLGFQQRC). Residues 112-330 (RVLRVVLLGA…QYLLAQARPG (219 aa)) enclose the Era-type G domain. Residues 120–127 (GAPNAGKS) form a G1 region. Residue 120 to 127 (GAPNAGKS) participates in GTP binding. The G2 stretch occupies residues 146–150 (HTTRS). The tract at residues 167 to 170 (DTPG) is G3. Position 167–171 (167–171 (DTPGL)) interacts with GTP. A Phosphoserine modification is found at Ser173. 236 to 239 (NKVD) contributes to the GTP binding site. The tract at residues 236 to 239 (NKVD) is G4. A disordered region spans residues 264 to 296 (LKTKQALRSRPDTHCPSPAAQGPNPQPVRDPQQ). The segment at 308-310 (LSA) is G5. The region spanning 360 to 437 (LPEEVPYNVQ…QLRLSVKLLK (78 aa)) is the KH type-2 domain.

This sequence belongs to the TRAFAC class TrmE-Era-EngA-EngB-Septin-like GTPase superfamily. Era GTPase family.

The protein resides in the mitochondrion matrix. It is found in the mitochondrion inner membrane. Probable GTPase that plays a role in the mitochondrial ribosomal small subunit assembly. Specifically binds the 12S mitochondrial rRNA (12S mt-rRNA) to a 33 nucleotide section delineating the 3' terminal stem-loop region. May act as a chaperone that protects the 12S mt-rRNA on the 28S mitoribosomal subunit during ribosomal small subunit assembly. The protein is GTPase Era, mitochondrial (ERAL1) of Bos taurus (Bovine).